The sequence spans 263 residues: Small ribosomal subunit protein eS4 (263 aa).

Positions 42–104 constitute an S4 RNA-binding domain; that stretch reads LPLIIFLRNR…TGENFRLIYD (63 aa).

Belongs to the eukaryotic ribosomal protein eS4 family.

The polypeptide is Small ribosomal subunit protein eS4 (RPS4) (Cricetulus griseus (Chinese hamster)).